The sequence spans 131 residues: MDVLFVAIFAVPLILGQEYEDEERLGEDEYYQVVYYYTVTPSYDDFSADFTIDYSIFESEDRLNRLDKDITEAIETTISLETARADHPKPVTVKPVTTEPSPDLNDAVSSLRSPIPLLLSCAFVQVGMYFM.

The first 16 residues, 1–16, serve as a signal peptide directing secretion; that stretch reads MDVLFVAIFAVPLILG.

The protein localises to the secreted. This is an uncharacterized protein from Homo sapiens (Human).